The sequence spans 493 residues: Glutamyl-tRNA(Gln) amidotransferase subunit A (493 aa).

Active-site charge relay system residues include Lys-78 and Ser-158. The active-site Acyl-ester intermediate is Ser-182.

The protein belongs to the amidase family. GatA subfamily. Heterotrimer of A, B and C subunits.

The enzyme catalyses L-glutamyl-tRNA(Gln) + L-glutamine + ATP + H2O = L-glutaminyl-tRNA(Gln) + L-glutamate + ADP + phosphate + H(+). Allows the formation of correctly charged Gln-tRNA(Gln) through the transamidation of misacylated Glu-tRNA(Gln) in organisms which lack glutaminyl-tRNA synthetase. The reaction takes place in the presence of glutamine and ATP through an activated gamma-phospho-Glu-tRNA(Gln). The polypeptide is Glutamyl-tRNA(Gln) amidotransferase subunit A (Rickettsia bellii (strain RML369-C)).